Reading from the N-terminus, the 321-residue chain is MKKLTLFIGLMALGTTSAWASCWQSNSAYEINMAMGRVVVSPDLPVGSVIATKTWTMPDNNTIYVTCDRNTTLKSDAKVVAAGLVQGANKVYSTAIPGIGLRFSRKGAISMIYPDSYTTTGSSFRLVGSTFTLDIIKTSTTTGSGTLASGPYTEYGPGFTILKTSLNADAITIVSPSCTILGGKNMNVDIGTIKRADLKGVGTWAGGTPFDIKLECSGGVSVSGYANINTSFSGTLATNTSANQGVLLNEKTGNSAAKGVGVQVIKDNTPLEFNKKHNIGTLQSQETRYITLPLHARFYQYAPTTSTGEVESHLVFNLTYD.

Residues 1–18 form the signal peptide; it reads MKKLTLFIGLMALGTTSA.

The protein belongs to the fimbrial protein family.

It localises to the fimbrium. This is Fimbria adhesin protein (mrkD) from Klebsiella pneumoniae.